Reading from the N-terminus, the 207-residue chain is Glycerol-3-phosphate acyltransferase (207 aa).

The next 6 helical transmembrane spans lie at 8 to 28, 64 to 84, 92 to 112, 122 to 142, 154 to 174, and 176 to 196; these read NIVF…LILA, LGIA…LVGI, TLWA…YLGL, LGVY…VWIV, SLLG…GLGI, and SNIP…PNIV.

This sequence belongs to the PlsY family. Probably interacts with PlsX.

Its subcellular location is the cell inner membrane. It catalyses the reaction an acyl phosphate + sn-glycerol 3-phosphate = a 1-acyl-sn-glycero-3-phosphate + phosphate. The protein operates within lipid metabolism; phospholipid metabolism. In terms of biological role, catalyzes the transfer of an acyl group from acyl-phosphate (acyl-PO(4)) to glycerol-3-phosphate (G3P) to form lysophosphatidic acid (LPA). This enzyme utilizes acyl-phosphate as fatty acyl donor, but not acyl-CoA or acyl-ACP. In Aliarcobacter butzleri (strain RM4018) (Arcobacter butzleri), this protein is Glycerol-3-phosphate acyltransferase.